We begin with the raw amino-acid sequence, 99 residues long: Putative protein tag-209 (99 aa).

The N-terminal stretch at 1-16 is a signal peptide; sequence MLKLLAFVALLSVSVS.

This Caenorhabditis elegans protein is Putative protein tag-209 (tag-209).